Reading from the N-terminus, the 459-residue chain is NADH oxidase (459 aa).

Position 10 (N10) interacts with FAD. Residue H11 is the Proton acceptor of the active site. Residues A12, D34, Q35, C44, V81, A110, S113, K143, and Y172 each coordinate FAD. Catalysis depends on C44, which acts as the Redox-active. At C44 the chain carries Cysteine sulfinic acid (-SO2H). Residues I173, D192, Y201, and G256 each contribute to the NAD(+) site. Residue D294 participates in FAD binding. Residue A310 participates in NAD(+) binding. 3 residues coordinate FAD: L311, A312, and S313. G341 serves as a coordination point for NAD(+). F439 is a binding site for FAD.

It belongs to the class-III pyridine nucleotide-disulfide oxidoreductase family. FAD is required as a cofactor.

It is found in the secreted. It localises to the cell wall. The enzyme catalyses 2 NADH + O2 + 2 H(+) = 2 NAD(+) + 2 H2O. Functionally, catalyzes the four-electron reduction of molecular oxygen to water. Plays a role in redox balance maintenance. May be involved in mediating bacterial adhesion to host cells. May be considered a potential virulence factor. The polypeptide is NADH oxidase (Streptococcus pneumoniae serotype 4 (strain ATCC BAA-334 / TIGR4)).